Here is a 159-residue protein sequence, read N- to C-terminus: Protein SPA, chloroplastic (159 aa).

Residues 1–47 (MLTAPSLSRFKSPFISSPLKLPTLSSSFFTQKFHQTCRRRNSYPCIK) constitute a chloroplast transit peptide. Residues 56-76 (VIAITVGVLSVAIGVGIPVFY) form a helical membrane-spanning segment. The segment at 85-145 (KRENTQPCFP…TCTTCQGSGI (61 aa)) is CR-type-like. CXXCXGXG motif repeat units follow at residues 92-99 (CFPCTGTG), 103-110 (CRFCMGTG), 126-133 (CINCDGAG), and 137-144 (CTTCQGSG).

Expressed in source leaves. Lower levels of expression in fruits and stems.

It localises to the plastid. It is found in the chloroplast thylakoid membrane. Functionally, participates in determining harvest index (HI) by affecting source-sink carbon distribution. Up-regulates the conversion of fixed carbon to exportable sugars. The protein is Protein SPA, chloroplastic of Solanum lycopersicum (Tomato).